We begin with the raw amino-acid sequence, 1215 residues long: RNA-dependent RNA polymerase 1 (1215 aa).

The protein belongs to the RdRP family. As to quaternary structure, cid12, hrr1 and rdp1 interact forming the RNA-directed RNA polymerase complex (RDRC). The RDRC complex interacts with the RITS complex via interaction between ago1 and hrr1. Clr4 has a role in mediating this interaction.

It localises to the cytoplasm. Its subcellular location is the nucleus. The protein resides in the chromosome. It is found in the telomere. The protein localises to the centromere. It catalyses the reaction RNA(n) + a ribonucleoside 5'-triphosphate = RNA(n+1) + diphosphate. In terms of biological role, has a role in the RNA interference (RNAi) pathway which is important for heterochromatin formation, accurate chromosome segregation, centromere cohesion and telomere function during mitosis and meiosis. Required for both post-transcriptional and transcriptional gene silencing. Required for silencing at the centromeres and for initiation of transcriptionally silent heterochromatin at the mating type locus. Promotes histone H3 'Lys-10' methylation necessary for centromere function. Required for recruitment of swi6 and cohesin to an ectopic dg repeat. A member of the RNA-directed RNA polymerase complex (RDRC) which is involved in the generation of small interfering RNAs (siRNAs) and mediates their association with the RNA-induced transcriptional silencing (RITS) complex. RITS acts as a priming complex for dsRNA synthesis at the site of non-coding centromeric RNA. Its RNA-dependent RNA polymerase activity is critical in siRNA production necessary for heterochromatin formation. The sequence is that of RNA-dependent RNA polymerase 1 (rdp1) from Schizosaccharomyces pombe (strain 972 / ATCC 24843) (Fission yeast).